The following is a 292-amino-acid chain: RNA-binding P34 protein (292 aa).

Residues 29–46 (CAIYTVACRILFLSVGFM) traverse the membrane as a helical segment. The interval 219–292 (EGFKSPQVEY…NFKAKNKNNE (74 aa)) is RNA-binding.

The protein resides in the host endoplasmic reticulum membrane. In terms of biological role, acts as a ssRNA-binding protein that may be involved in targeting RNA2 to replication sites or facilitating RNA2 replication. This Lettuce infectious yellows virus (isolate United States/92) (LIYV) protein is RNA-binding P34 protein.